A 250-amino-acid polypeptide reads, in one-letter code: ATP synthase subunit a (250 aa).

Helical transmembrane passes span 26–46 (FTNA…FLYL), 84–104 (FFPM…LGMV), 114–134 (IIVT…YGFY), 143–163 (LFVP…IEII), 193–213 (FVAS…LPLI), and 216–236 (VALT…FAVL).

The protein belongs to the ATPase A chain family. As to quaternary structure, F-type ATPases have 2 components, CF(1) - the catalytic core - and CF(0) - the membrane proton channel. CF(1) has five subunits: alpha(3), beta(3), gamma(1), delta(1), epsilon(1). CF(0) has three main subunits: a(1), b(2) and c(9-12). The alpha and beta chains form an alternating ring which encloses part of the gamma chain. CF(1) is attached to CF(0) by a central stalk formed by the gamma and epsilon chains, while a peripheral stalk is formed by the delta and b chains.

The protein resides in the cell inner membrane. Key component of the proton channel; it plays a direct role in the translocation of protons across the membrane. In Rhizobium meliloti (strain 1021) (Ensifer meliloti), this protein is ATP synthase subunit a.